We begin with the raw amino-acid sequence, 358 residues long: 4-hydroxy-3-methylbut-2-en-1-yl diphosphate synthase (flavodoxin) (358 aa).

The [4Fe-4S] cluster site is built by C270, C273, C305, and E312.

The protein belongs to the IspG family. [4Fe-4S] cluster serves as cofactor.

The catalysed reaction is (2E)-4-hydroxy-3-methylbut-2-enyl diphosphate + oxidized [flavodoxin] + H2O + 2 H(+) = 2-C-methyl-D-erythritol 2,4-cyclic diphosphate + reduced [flavodoxin]. It participates in isoprenoid biosynthesis; isopentenyl diphosphate biosynthesis via DXP pathway; isopentenyl diphosphate from 1-deoxy-D-xylulose 5-phosphate: step 5/6. Functionally, converts 2C-methyl-D-erythritol 2,4-cyclodiphosphate (ME-2,4cPP) into 1-hydroxy-2-methyl-2-(E)-butenyl 4-diphosphate. The chain is 4-hydroxy-3-methylbut-2-en-1-yl diphosphate synthase (flavodoxin) from Ruthia magnifica subsp. Calyptogena magnifica.